Here is a 238-residue protein sequence, read N- to C-terminus: Trypsin-3 (238 aa).

The signal sequence occupies residues 1–7 (FAVAFAA). Residues 8–15 (PIDDEDDK) constitute a propeptide, activation peptide. Residues 16 to 236 (IVGGYECRKN…YRSWISSTMS (221 aa)) enclose the Peptidase S1 domain. Intrachain disulfides connect Cys22–Cys152, Cys40–Cys56, Cys124–Cys225, Cys131–Cys198, Cys163–Cys177, and Cys188–Cys212. Residue His55 is the Charge relay system of the active site. Glu67, Asn69, Val72, and Glu77 together coordinate Ca(2+). The Charge relay system role is filled by Asp99. Ser192 acts as the Charge relay system in catalysis.

The protein belongs to the peptidase S1 family. The cofactor is Ca(2+).

Its subcellular location is the secreted. It is found in the extracellular space. It catalyses the reaction Preferential cleavage: Arg-|-Xaa, Lys-|-Xaa.. The sequence is that of Trypsin-3 from Salmo salar (Atlantic salmon).